Reading from the N-terminus, the 1499-residue chain is Rho GTPase-activating protein 35 (1499 aa).

The tract at residues 1–266 is has GTPase activity, required for proper localization; the sequence is MMMARKQDVR…IPYFEALKQQ (266 aa). GTP is bound by residues Lys-28, 33–37, Leu-52, Ser-56, 95–97, 201–203, and 229–231; these read IGKSC, EQT, KCD, and SAR. FF domains follow at residues 270–327, 368–422, 429–483, and 485–550; these read IATA…HIHR, KLLE…HLEK, RAEM…HQKQ, and IDRA…HIHF. Tyr-308 is modified (phosphotyrosine). A Phosphoserine modification is found at Ser-589. One can recognise a pG1 pseudoGTPase domain in the interval 592 to 767; that stretch reads DPNIDRINLV…LLDSKRNLNL (176 aa). Phosphoserine is present on residues Ser-770 and Ser-773. In terms of domain architecture, pG2 pseudoGTPase spans 783-947; that stretch reads RIVMCLMCGD…FKDVVEKKNI (165 aa). A phosphoserine mark is found at Ser-970, Ser-975, Ser-985, and Ser-1072. Residue Tyr-1087 is modified to Phosphotyrosine. Position 1105 is a phosphotyrosine; by ABL2 and PTK6 (Tyr-1105). Residues 1124–1141 show a composition bias toward polar residues; the sequence is KAQSNGSGNGSDSEMDTS. Positions 1124–1148 are disordered; that stretch reads KAQSNGSGNGSDSEMDTSSLERGRK. 6 positions are modified to phosphoserine: Ser-1134, Ser-1142, Ser-1150, Ser-1176, Ser-1179, and Ser-1221. Residues 1177-1207 are disordered; the sequence is VGSDDELGPIRKKEEDQASQGYKGDNAVIPY. A required for phospholipid binding and regulation of the substrate preference region spans residues 1213-1236; sequence PRRRNILRSLRRNTKKPKPKPRPS. The residue at position 1226 (Thr-1226) is a Phosphothreonine. At Ser-1236 the chain carries Phosphoserine. One can recognise a Rho-GAP domain in the interval 1249-1436; it reads VPLTTVVTPE…LFIQQCPFFF (188 aa). A disordered region spans residues 1446–1499; it reads GAAPGSPSAMAPTVPFLTSTPATSQPSPPQSPPPTPQSPMQPLLSSQLQAEHTL. Residues 1448–1470 show a composition bias toward low complexity; the sequence is APGSPSAMAPTVPFLTSTPATSQ. Residues 1471-1484 are compositionally biased toward pro residues; sequence PSPPQSPPPTPQSP. Residues Ser-1472 and Ser-1476 each carry the phosphoserine modification. Thr-1480 carries the post-translational modification Phosphothreonine. Ser-1483 carries the phosphoserine modification. The segment covering 1485 to 1499 has biased composition (low complexity); it reads MQPLLSSQLQAEHTL.

As to quaternary structure, interacts with RASA1. Interacts with the general transcription factor GTF2I, the interaction sequesters GTF2I in the cytoplasm. Post-translationally, phosphorylation of Tyr-1105 by PTK6 promotes the association with RASA1, inactivating RHOA while activating RAS. Phosphorylation at Tyr-308 by PDGFRA inhibits binding to GTF2I. Phosphorylated by PRKCA at Ser-1221 and Thr-1226, induces relocalization from the cytoplasm to regions of plasma membrane ruffling and prevents the binding and substrate specificity regulation by phospholipids. In brain, phosphorylated by FYN and SRC. During focal adhesion formation, phosphorylated by MAPK1 and MAPK3 at the C-terminal region, probably at Ser-1451, Ser-1476, Thr-1480 and Ser-1483. Phosphorylation by MAPK1 and MAPK3 inhibits GAP function and localizes ARGHAP35 away from newly forming focal adhesions and stress fibers in cells spreading on fibronectin. Phosphorylation at Ser-1476 and Thr-1480 by GSK3B requires priming by MAPK and inhibits RhoGAP activity and modulates polarized cell migration. Ubiquitously expressed.

It localises to the cytoplasm. The protein resides in the cytoskeleton. It is found in the cilium basal body. Its subcellular location is the nucleus. The protein localises to the cell membrane. Its function is as follows. Rho GTPase-activating protein (GAP). Binds several acidic phospholipids which inhibits the Rho GAP activity to promote the Rac GAP activity. This binding is inhibited by phosphorylation by PRKCA. Involved in cell differentiation as well as cell adhesion and migration, plays an important role in retinal tissue morphogenesis, neural tube fusion, midline fusion of the cerebral hemispheres and mammary gland branching morphogenesis. Transduces signals from p21-ras to the nucleus, acting via the ras GTPase-activating protein (GAP). Transduces SRC-dependent signals from cell-surface adhesion molecules, such as laminin, to promote neurite outgrowth. Regulates axon outgrowth, guidance and fasciculation. Modulates Rho GTPase-dependent F-actin polymerization, organization and assembly, is involved in polarized cell migration and in the positive regulation of ciliogenesis and cilia elongation. During mammary gland development, is required in both the epithelial and stromal compartments for ductal outgrowth. Represses transcription of the glucocorticoid receptor by binding to the cis-acting regulatory sequence 5'-GAGAAAAGAAACTGGAGAAACTC-3'; this function is however unclear and would need additional experimental evidences. The chain is Rho GTPase-activating protein 35 from Rattus norvegicus (Rat).